Reading from the N-terminus, the 93-residue chain is Putative regulatory protein Fnod_1678 (93 aa).

The protein belongs to the RemA family.

This chain is Putative regulatory protein Fnod_1678, found in Fervidobacterium nodosum (strain ATCC 35602 / DSM 5306 / Rt17-B1).